A 482-amino-acid chain; its full sequence is Cysteine--tRNA ligase (482 aa).

Residue Cys-29 participates in Zn(2+) binding. The 'HIGH' region signature appears at 31-41 (PTVYDFAHIGN). Zn(2+) is bound by residues Cys-224, His-249, and Glu-253. Positions 282-286 (KMSKS) match the 'KMSKS' region motif. ATP is bound at residue Lys-285.

This sequence belongs to the class-I aminoacyl-tRNA synthetase family. As to quaternary structure, monomer. It depends on Zn(2+) as a cofactor.

The protein localises to the cytoplasm. The catalysed reaction is tRNA(Cys) + L-cysteine + ATP = L-cysteinyl-tRNA(Cys) + AMP + diphosphate. The polypeptide is Cysteine--tRNA ligase (Nitrobacter hamburgensis (strain DSM 10229 / NCIMB 13809 / X14)).